A 105-amino-acid chain; its full sequence is Large ribosomal subunit protein eL36 (105 aa).

Belongs to the eukaryotic ribosomal protein eL36 family. As to quaternary structure, component of the large ribosomal subunit.

The protein localises to the cytoplasm. It is found in the cytosol. Functionally, component of the large ribosomal subunit. The ribosome is a large ribonucleoprotein complex responsible for the synthesis of proteins in the cell. In Hydrophis hardwickii (Hardwick's spine-bellied seasnake), this protein is Large ribosomal subunit protein eL36 (RPL36).